The chain runs to 265 residues: Tryptophan 2,3-dioxygenase (265 aa).

Substrate-binding positions include 38–42 and Arg-104; that span reads FIVVH. His-223 is a heme binding site. Residue Thr-237 coordinates substrate.

Belongs to the tryptophan 2,3-dioxygenase family. In terms of assembly, homotetramer. It depends on heme as a cofactor.

The catalysed reaction is L-tryptophan + O2 = N-formyl-L-kynurenine. Its pathway is amino-acid degradation; L-tryptophan degradation via kynurenine pathway; L-kynurenine from L-tryptophan: step 1/2. Functionally, heme-dependent dioxygenase that catalyzes the oxidative cleavage of the L-tryptophan (L-Trp) pyrrole ring and converts L-tryptophan to N-formyl-L-kynurenine. Catalyzes the oxidative cleavage of the indole moiety. The protein is Tryptophan 2,3-dioxygenase of Anaeromyxobacter dehalogenans (strain 2CP-C).